An 884-amino-acid chain; its full sequence is Valine--tRNA ligase (884 aa).

The 'HIGH' region motif lies at 46–56 (PNVTGKLHLGH). The 'KMSKS' region motif lies at 520–524 (KMSKS). Lys-523 provides a ligand contact to ATP. The stretch at 809–844 (LADLLNVEEELARLEKELAKWQKELNMVGKKLSNER) forms a coiled coil.

Belongs to the class-I aminoacyl-tRNA synthetase family. ValS type 1 subfamily. As to quaternary structure, monomer.

Its subcellular location is the cytoplasm. It catalyses the reaction tRNA(Val) + L-valine + ATP = L-valyl-tRNA(Val) + AMP + diphosphate. Its function is as follows. Catalyzes the attachment of valine to tRNA(Val). As ValRS can inadvertently accommodate and process structurally similar amino acids such as threonine, to avoid such errors, it has a 'posttransfer' editing activity that hydrolyzes mischarged Thr-tRNA(Val) in a tRNA-dependent manner. This chain is Valine--tRNA ligase, found in Streptococcus agalactiae serotype Ia (strain ATCC 27591 / A909 / CDC SS700).